The sequence spans 78 residues: Small ribosomal subunit protein bS18 (78 aa).

This sequence belongs to the bacterial ribosomal protein bS18 family. As to quaternary structure, part of the 30S ribosomal subunit. Forms a tight heterodimer with protein bS6.

Binds as a heterodimer with protein bS6 to the central domain of the 16S rRNA, where it helps stabilize the platform of the 30S subunit. In Lacticaseibacillus casei (strain BL23) (Lactobacillus casei), this protein is Small ribosomal subunit protein bS18.